Reading from the N-terminus, the 483-residue chain is Glutamyl-tRNA(Gln) amidotransferase subunit A (483 aa).

Active-site charge relay system residues include K77 and S152. The active-site Acyl-ester intermediate is the S176.

It belongs to the amidase family. GatA subfamily. Heterotrimer of A, B and C subunits.

It carries out the reaction L-glutamyl-tRNA(Gln) + L-glutamine + ATP + H2O = L-glutaminyl-tRNA(Gln) + L-glutamate + ADP + phosphate + H(+). Its function is as follows. Allows the formation of correctly charged Gln-tRNA(Gln) through the transamidation of misacylated Glu-tRNA(Gln) in organisms which lack glutaminyl-tRNA synthetase. The reaction takes place in the presence of glutamine and ATP through an activated gamma-phospho-Glu-tRNA(Gln). This Shouchella clausii (strain KSM-K16) (Alkalihalobacillus clausii) protein is Glutamyl-tRNA(Gln) amidotransferase subunit A.